The chain runs to 295 residues: Tyrosine recombinase XerC (295 aa).

One can recognise a Core-binding (CB) domain in the interval 1–85 (MQTYLQKYWN…ALRQFLAFLV (85 aa)). The region spanning 106-285 (HLPKNINAEQ…NFQHLAEVYD (180 aa)) is the Tyr recombinase domain. Catalysis depends on residues R145, K169, H237, R240, and H263. Y272 serves as the catalytic O-(3'-phospho-DNA)-tyrosine intermediate.

This sequence belongs to the 'phage' integrase family. XerC subfamily. As to quaternary structure, forms a cyclic heterotetrameric complex composed of two molecules of XerC and two molecules of XerD.

The protein resides in the cytoplasm. Site-specific tyrosine recombinase, which acts by catalyzing the cutting and rejoining of the recombining DNA molecules. The XerC-XerD complex is essential to convert dimers of the bacterial chromosome into monomers to permit their segregation at cell division. It also contributes to the segregational stability of plasmids. The chain is Tyrosine recombinase XerC from Mannheimia succiniciproducens (strain KCTC 0769BP / MBEL55E).